Consider the following 160-residue polypeptide: UPF0178 protein XC_1827 (160 aa).

This sequence belongs to the UPF0178 family.

This is UPF0178 protein XC_1827 from Xanthomonas campestris pv. campestris (strain 8004).